The primary structure comprises 141 residues: Putative pre-16S rRNA nuclease (141 aa).

This sequence belongs to the YqgF nuclease family.

It localises to the cytoplasm. Its function is as follows. Could be a nuclease involved in processing of the 5'-end of pre-16S rRNA. This is Putative pre-16S rRNA nuclease from Dictyoglomus turgidum (strain DSM 6724 / Z-1310).